An 87-amino-acid chain; its full sequence is Long neurotoxin homolog (87 aa).

An N-terminal signal peptide occupies residues 1-21 (MKTLLLTLVVVTIVCLDLGYT). 5 disulfide bridges follow: cysteine 24/cysteine 47, cysteine 27/cysteine 32, cysteine 40/cysteine 64, cysteine 68/cysteine 80, and cysteine 81/cysteine 86.

As to expression, expressed by the venom gland.

Its subcellular location is the secreted. Its function is as follows. Inhibits carbachol-induced muscle contraction in a reversible manner. This is Long neurotoxin homolog from Bungarus multicinctus (Many-banded krait).